A 161-amino-acid chain; its full sequence is 2-C-methyl-D-erythritol 2,4-cyclodiphosphate synthase (161 aa).

Residues D10 and H12 each coordinate a divalent metal cation. 4-CDP-2-C-methyl-D-erythritol 2-phosphate is bound by residues 10-12 (DVH) and 36-37 (HS). H44 contacts a divalent metal cation. Residues 58–60 (DIG), 63–67 (FSDTD), and R144 contribute to the 4-CDP-2-C-methyl-D-erythritol 2-phosphate site.

Belongs to the IspF family. As to quaternary structure, homotrimer. It depends on a divalent metal cation as a cofactor.

The catalysed reaction is 4-CDP-2-C-methyl-D-erythritol 2-phosphate = 2-C-methyl-D-erythritol 2,4-cyclic diphosphate + CMP. The protein operates within isoprenoid biosynthesis; isopentenyl diphosphate biosynthesis via DXP pathway; isopentenyl diphosphate from 1-deoxy-D-xylulose 5-phosphate: step 4/6. Involved in the biosynthesis of isopentenyl diphosphate (IPP) and dimethylallyl diphosphate (DMAPP), two major building blocks of isoprenoid compounds. Catalyzes the conversion of 4-diphosphocytidyl-2-C-methyl-D-erythritol 2-phosphate (CDP-ME2P) to 2-C-methyl-D-erythritol 2,4-cyclodiphosphate (ME-CPP) with a corresponding release of cytidine 5-monophosphate (CMP). This chain is 2-C-methyl-D-erythritol 2,4-cyclodiphosphate synthase, found in Burkholderia cenocepacia (strain HI2424).